Consider the following 537-residue polypeptide: Spore coat protein SP70 (537 aa).

The N-terminal stretch at 1 to 20 (MRILKLAALSCLLFIAPSLS) is a signal peptide. Positions 21-140 (INCDGLSKDQ…CQIPATGGGP (120 aa)) constitute a DSCP-N domain. Residue N97 is glycosylated (N-linked (GlcNAc...) asparagine). The region spanning 157–179 (SCDKVNCPNGYICTIVNQLAVCV) is the Follistatin-like 1 domain. A disordered region spans residues 183–246 (SSSSSSSSTT…GSHTTTGGST (64 aa)). Follistatin-like domains are found at residues 250 to 272 (TCGN…AVCV), 278 to 296 (SCAN…GECI), 358 to 380 (TCKT…PTCV), and 389 to 415 (TCKD…EECC).

In terms of processing, phosphorylated and fucosylated.

This chain is Spore coat protein SP70 (cotB), found in Dictyostelium discoideum (Social amoeba).